The primary structure comprises 690 residues: Ligand of Numb protein X 2 (690 aa).

An RING-type zinc finger spans residues 50-88 (CHICLQPLLQPLDTPCGHTFCYKCLRNFLQEKDFCPLDR). Positions 198 to 224 (STWSEEPGLDNPAFEESAGADTTQQPL) are disordered. The short motif at 208 to 211 (NPAF) is the NPXY motif element. PDZ domains lie at 233 to 318 (TIEI…LRER), 339 to 422 (QVAL…ARPG), 468 to 554 (HITV…KALE), and 600 to 688 (DIVL…WPGS). The disordered stretch occupies residues 418 to 455 (IARPGKPQPGNTIREAGNHSSSSQHHTPPPYYSRPSSH).

Interacts with the phosphotyrosine interaction domain of NUMB.

In Homo sapiens (Human), this protein is Ligand of Numb protein X 2 (LNX2).